A 313-amino-acid chain; its full sequence is Porphobilinogen deaminase (313 aa).

At C241 the chain carries S-(dipyrrolylmethanemethyl)cysteine.

It belongs to the HMBS family. As to quaternary structure, monomer. It depends on dipyrromethane as a cofactor.

It catalyses the reaction 4 porphobilinogen + H2O = hydroxymethylbilane + 4 NH4(+). It participates in porphyrin-containing compound metabolism; protoporphyrin-IX biosynthesis; coproporphyrinogen-III from 5-aminolevulinate: step 2/4. Functionally, tetrapolymerization of the monopyrrole PBG into the hydroxymethylbilane pre-uroporphyrinogen in several discrete steps. The sequence is that of Porphobilinogen deaminase from Sulfurimonas denitrificans (strain ATCC 33889 / DSM 1251) (Thiomicrospira denitrificans (strain ATCC 33889 / DSM 1251)).